Consider the following 251-residue polypeptide: Small ribosomal subunit protein uS2 (251 aa).

The disordered stretch occupies residues L232–A251. Acidic residues predominate over residues G235–A251.

The protein belongs to the universal ribosomal protein uS2 family.

In Geobacter metallireducens (strain ATCC 53774 / DSM 7210 / GS-15), this protein is Small ribosomal subunit protein uS2.